The primary structure comprises 91 residues: ATP synthase subunit c (91 aa).

2 helical membrane-spanning segments follow: residues 4–24 (FTMC…GTGI) and 53–73 (IGLA…LIIL).

Belongs to the ATPase C chain family. F-type ATPases have 2 components, F(1) - the catalytic core - and F(0) - the membrane proton channel. F(1) has five subunits: alpha(3), beta(3), gamma(1), delta(1), epsilon(1). F(0) has three main subunits: a(1), b(2) and c(10-14). The alpha and beta chains form an alternating ring which encloses part of the gamma chain. F(1) is attached to F(0) by a central stalk formed by the gamma and epsilon chains, while a peripheral stalk is formed by the delta and b chains.

It is found in the cell inner membrane. F(1)F(0) ATP synthase produces ATP from ADP in the presence of a proton or sodium gradient. F-type ATPases consist of two structural domains, F(1) containing the extramembraneous catalytic core and F(0) containing the membrane proton channel, linked together by a central stalk and a peripheral stalk. During catalysis, ATP synthesis in the catalytic domain of F(1) is coupled via a rotary mechanism of the central stalk subunits to proton translocation. Functionally, key component of the F(0) channel; it plays a direct role in translocation across the membrane. A homomeric c-ring of between 10-14 subunits forms the central stalk rotor element with the F(1) delta and epsilon subunits. In Geobacter sulfurreducens (strain ATCC 51573 / DSM 12127 / PCA), this protein is ATP synthase subunit c.